A 912-amino-acid polypeptide reads, in one-letter code: Transferrin-binding protein A (912 aa).

The signal sequence occupies residues Met1–Ala23. The short motif at Glu50–Glu57 is the TonB box element. Residues Lys63–Lys188 enclose the TBDR plug domain. Residues Ser199 to Phe912 enclose the TBDR beta-barrel domain. A TonB C-terminal box motif is present at residues Thr895–Phe912.

The protein belongs to the TonB-dependent receptor family.

The protein localises to the cell outer membrane. Haemophilus acquires iron by extracting it from serum transferrin (TF) in its human host. Acts as a transferrin receptor and is required for transferrin utilization. This Haemophilus influenzae (strain ATCC 51907 / DSM 11121 / KW20 / Rd) protein is Transferrin-binding protein A.